A 496-amino-acid polypeptide reads, in one-letter code: Transcription factor CP2 (496 aa).

Positions 61 to 300 (ENKILPFQYV…SPGFNSSHSS (240 aa)) constitute a Grh/CP2 DB domain. The interval 133–386 (EHQQLEGWRW…LFNALKGRMV (254 aa)) is DNA-binding. Disordered regions lie at residues 238–268 (FKPK…YQPS) and 296–327 (SSHS…LLPT). Over residues 241 to 265 (KGADRKQKTDREKMEKRTPHEKEKY) the composition is skewed to basic and acidic residues.

This sequence belongs to the grh/CP2 family. CP2 subfamily. As to quaternary structure, component of the SSP (stage selector protein) complex, which appears to be a heteromer of TFCP2 and 2 copies of NFE4. As to expression, expressed in the epiblast at the pre-primitive streak stage. At the primitive streak stage, expressed in the extending primitive streak and in the prospective neural plate. At stages 7 and 8, expressed in the neural folds, somites and in the regressing primitive streak. At stage 12, ubiquitously expressed in the whole embryo.

The protein resides in the nucleus. Functionally, binds the B-response element 5'-CAAGTCCAGGCAAGT-3' of the ENS1/ERNI promoter. May be the major transcription activator thus being essential for its expression. The sequence is that of Transcription factor CP2 (TFCP2) from Gallus gallus (Chicken).